Reading from the N-terminus, the 572-residue chain is Excitatory amino acid transporter 2 (572 aa).

Over residues 1-11 (MASTEGANNMP) the composition is skewed to polar residues. Residues 1-28 (MASTEGANNMPKQVEVRMHDSHLSSDEP) form a disordered region. The Cytoplasmic segment spans residues 1–44 (MASTEGANNMPKQVEVRMHDSHLSSDEPKHRNLGMRMCDKLGKN). Phosphoserine is present on residues Ser-3, Ser-21, Ser-24, and Ser-25. A compositionally biased stretch (basic and acidic residues) spans 14 to 28 (VEVRMHDSHLSSDEP). Cys-38 carries the S-palmitoyl cysteine lipid modification. 3 consecutive transmembrane segments (helical) span residues 45-64 (LLLS…GGLL), 88-108 (MLKM…LSGL), and 121-142 (MVYY…VLAI). 2 N-linked (GlcNAc...) asparagine glycosylation sites follow: Asn-205 and Asn-215. Transmembrane regions (helical) follow at residues 235-258 (FKDG…MGKM), 268-295 (FFNI…ACLI), and 317-338 (ITVI…YFVV). The segment at residues 344 to 374 (FSFFAGIFQAWITALGTASSAGTLPVTFRCL) is an intramembrane region (discontinuously helical). 361-363 (ASS) serves as a coordination point for L-aspartate. A helical transmembrane segment spans residues 384-410 (VTRFVLPVGATINMDGTALYEAVAAIF). Gly-392, Thr-394, and Asn-396 together coordinate Na(+). L-aspartate contacts are provided by residues Thr-400, 441-445 (IPSAG), Asp-474, and Asn-481. Residues 424–457 (IVTVSLTATLASIGAASIPSAGLVTMLLILTAVG) constitute an intramembrane region (discontinuously helical). The helical transmembrane segment at 471 to 492 (WLLDRMRTSVNVVGDSFGAGIV) threads the bilayer. The Na(+) site is built by Asn-481 and Asp-485. 4 positions are modified to phosphoserine: Ser-505, Ser-520, Ser-530, and Ser-532. Tyr-537 is subject to Phosphotyrosine. Ser-542, Ser-558, and Ser-562 each carry phosphoserine.

This sequence belongs to the dicarboxylate/amino acid:cation symporter (DAACS) (TC 2.A.23) family. SLC1A2 subfamily. Homotrimer. Interacts with AJUBA. Post-translationally, glycosylated. Palmitoylation at Cys-38 is not required for correct subcellular localization, but is important for glutamate uptake activity. In terms of tissue distribution, detected in brain. Detected in embryonic forebrain, especially in globus pallidus, perirhinal cortex, lateral hypothalamus, hippocampus, and on fimbria and axonal pathways connecting the neocortex, basal ganglia and thalamus (at protein level). Isoform GLT1 is expressed in the brain. Isoforms GLT-1A and GLT-1B are expressed in the liver.

The protein localises to the cell membrane. The enzyme catalyses K(+)(in) + L-glutamate(out) + 3 Na(+)(out) + H(+)(out) = K(+)(out) + L-glutamate(in) + 3 Na(+)(in) + H(+)(in). The catalysed reaction is K(+)(in) + L-aspartate(out) + 3 Na(+)(out) + H(+)(out) = K(+)(out) + L-aspartate(in) + 3 Na(+)(in) + H(+)(in). It carries out the reaction D-aspartate(out) + K(+)(in) + 3 Na(+)(out) + H(+)(out) = D-aspartate(in) + K(+)(out) + 3 Na(+)(in) + H(+)(in). In terms of biological role, sodium-dependent, high-affinity amino acid transporter that mediates the uptake of L-glutamate and also L-aspartate and D-aspartate. Functions as a symporter that transports one amino acid molecule together with two or three Na(+) ions and one proton, in parallel with the counter-transport of one K(+) ion. Mediates Cl(-) flux that is not coupled to amino acid transport; this avoids the accumulation of negative charges due to aspartate and Na(+) symport. Essential for the rapid removal of released glutamate from the synaptic cleft, and for terminating the postsynaptic action of glutamate. The sequence is that of Excitatory amino acid transporter 2 (Slc1a2) from Mus musculus (Mouse).